Consider the following 119-residue polypeptide: Flagellar transcriptional regulator FlhD (119 aa).

It belongs to the FlhD family. As to quaternary structure, homodimer; disulfide-linked. Forms a heterohexamer composed of two FlhC and four FlhD subunits. Each FlhC binds a FlhD dimer, forming a heterotrimer, and a hexamer assembles by dimerization of two heterotrimers.

The protein resides in the cytoplasm. In terms of biological role, functions in complex with FlhC as a master transcriptional regulator that regulates transcription of several flagellar and non-flagellar operons by binding to their promoter region. Activates expression of class 2 flagellar genes, including fliA, which is a flagellum-specific sigma factor that turns on the class 3 genes. Also regulates genes whose products function in a variety of physiological pathways. The protein is Flagellar transcriptional regulator FlhD of Yersinia enterocolitica.